A 130-amino-acid polypeptide reads, in one-letter code: Histone H2A type 1-B/E (130 aa).

Residues 1-22 form a disordered region; sequence MSGRGKQGGKARAKAKTRSSRA. Ser2 is modified (N-acetylserine). Ser2 is modified (phosphoserine; by RPS6KA5). Arg4 bears the Citrulline; alternate mark. A Symmetric dimethylarginine; by PRMT5; alternate modification is found at Arg4. Residues Lys6 and Lys10 each carry the N6-(2-hydroxyisobutyryl)lysine; alternate modification. The residue at position 6 (Lys6) is an N6-acetyllysine; alternate. Residues 7-19 are compositionally biased toward basic residues; that stretch reads QGGKARAKAKTRS. N6-(beta-hydroxybutyryl)lysine; alternate occurs at positions 10 and 14. Lys10 is subject to N6-lactoyllysine; alternate. Residue Lys10 is modified to N6-succinyllysine; alternate. A Glycyl lysine isopeptide (Lys-Gly) (interchain with G-Cter in ubiquitin); alternate cross-link involves residue Lys14. Lys16 is covalently cross-linked (Glycyl lysine isopeptide (Lys-Gly) (interchain with G-Cter in ubiquitin)). An N6-(2-hydroxyisobutyryl)lysine; alternate modification is found at Lys37. Lys37 carries the post-translational modification N6-(beta-hydroxybutyryl)lysine; alternate. Position 37 is an N6-crotonyllysine; alternate (Lys37). N6-(2-hydroxyisobutyryl)lysine occurs at positions 75 and 76. N6-(2-hydroxyisobutyryl)lysine; alternate is present on Lys96. At Lys96 the chain carries N6-(beta-hydroxybutyryl)lysine; alternate. Lys96 bears the N6-succinyllysine; alternate mark. An N6-glutaryllysine; alternate modification is found at Lys96. The residue at position 105 (Gln105) is an N5-methylglutamine. Lys119 carries the post-translational modification N6-(2-hydroxyisobutyryl)lysine; alternate. Lys119 bears the N6-(beta-hydroxybutyryl)lysine; alternate mark. 2 positions are modified to N6-crotonyllysine; alternate: Lys119 and Lys120. 2 positions are modified to N6-glutaryllysine; alternate: Lys119 and Lys120. Residue Lys120 forms a Glycyl lysine isopeptide (Lys-Gly) (interchain with G-Cter in ubiquitin); alternate linkage. The residue at position 121 (Thr121) is a Phosphothreonine; by DCAF1. An N6-crotonyllysine; alternate modification is found at Lys126. N6-glutaryllysine; alternate is present on Lys126.

Belongs to the histone H2A family. The nucleosome is a histone octamer containing two molecules each of H2A, H2B, H3 and H4 assembled in one H3-H4 heterotetramer and two H2A-H2B heterodimers. The octamer wraps approximately 147 bp of DNA. Post-translationally, deiminated on Arg-4 in granulocytes upon calcium entry. Monoubiquitination of Lys-120 (H2AK119Ub) by RING1, TRIM37 and RNF2/RING2 complex gives a specific tag for epigenetic transcriptional repression and participates in X chromosome inactivation of female mammals. It is involved in the initiation of both imprinted and random X inactivation. Ubiquitinated H2A is enriched in inactive X chromosome chromatin. Ubiquitination of H2A functions downstream of methylation of 'Lys-27' of histone H3 (H3K27me). H2AK119Ub by RNF2/RING2 can also be induced by ultraviolet and may be involved in DNA repair. Monoubiquitination of Lys-120 (H2AK119Ub) by TRIM37 may promote transformation of cells in a number of breast cancers. Following DNA double-strand breaks (DSBs), it is ubiquitinated through 'Lys-63' linkage of ubiquitin moieties by the E2 ligase UBE2N and the E3 ligases RNF8 and RNF168, leading to the recruitment of repair proteins to sites of DNA damage. Ubiquitination at Lys-14 and Lys-16 (H2AK13Ub and H2AK15Ub, respectively) in response to DNA damage is initiated by RNF168 that mediates monoubiquitination at these 2 sites, and 'Lys-63'-linked ubiquitin are then conjugated to monoubiquitin; RNF8 is able to extend 'Lys-63'-linked ubiquitin chains in vitro. Deubiquitinated by USP51 at Lys-14 and Lys-16 (H2AK13Ub and H2AK15Ub, respectively) after damaged DNA is repaired. H2AK119Ub and ionizing radiation-induced 'Lys-63'-linked ubiquitination (H2AK13Ub and H2AK15Ub) are distinct events. In terms of processing, phosphorylation on Ser-2 (H2AS1ph) is enhanced during mitosis. Phosphorylation on Ser-2 by RPS6KA5/MSK1 directly represses transcription. Acetylation of H3 inhibits Ser-2 phosphorylation by RPS6KA5/MSK1. Phosphorylation at Thr-121 (H2AT120ph) by DCAF1 is present in the regulatory region of many tumor suppresor genes and down-regulates their transcription. Post-translationally, glutamine methylation at Gln-105 (H2AQ104me) by FBL is specifically dedicated to polymerase I. It is present at 35S ribosomal DNA locus and impairs binding of the FACT complex. Symmetric dimethylation on Arg-4 by the PRDM1/PRMT5 complex may play a crucial role in the germ-cell lineage. In terms of processing, crotonylation (Kcr) is specifically present in male germ cells and marks testis-specific genes in post-meiotic cells, including X-linked genes that escape sex chromosome inactivation in haploid cells. Crotonylation marks active promoters and enhancers and confers resistance to transcriptional repressors. It is also associated with post-meiotically activated genes on autosomes. Post-translationally, lactylated in macrophages by EP300/P300 by using lactoyl-CoA directly derived from endogenous or exogenous lactate, leading to stimulates gene transcription.

Its subcellular location is the nucleus. It localises to the chromosome. Core component of nucleosome. Nucleosomes wrap and compact DNA into chromatin, limiting DNA accessibility to the cellular machineries which require DNA as a template. Histones thereby play a central role in transcription regulation, DNA repair, DNA replication and chromosomal stability. DNA accessibility is regulated via a complex set of post-translational modifications of histones, also called histone code, and nucleosome remodeling. This chain is Histone H2A type 1-B/E, found in Homo sapiens (Human).